The primary structure comprises 202 residues: Transmembrane 4 L6 family member 1 (202 aa).

Topologically, residues 1–9 are cytoplasmic; it reads MCYVKCARY. The chain crosses the membrane as a helical span at residues 10-30; it reads IGYSLVWAAVFCIVANALLYF. At 31-49 the chain is on the extracellular side; that stretch reads PNGETKYATEDHLSRFVWY. A helical transmembrane segment spans residues 50-70; sequence FAGIVGGGLLMLLPAFVFIGM. Over 71–93 the chain is Cytoplasmic; sequence DEEDCCGCCGYENYGKRCSMLSS. The chain crosses the membrane as a helical span at residues 94–114; it reads VLAALIGIVGSAYCVIVASLG. The Extracellular segment spans residues 115–161; the sequence is LAEGPKCSDAHGVWNYTFASTEGQYLLNSSMWSKCYEPKHIVEWHVT. N-linked (GlcNAc...) asparagine glycans are attached at residues Asn-129 and Asn-142. The chain crosses the membrane as a helical span at residues 162–182; sequence LFSILLAFAAVEFILCLIQVI. Topologically, residues 183–202 are cytoplasmic; that stretch reads NGMLGGLCGYCCSRQQQYNC.

The protein belongs to the L6 tetraspanin family. Present in high molecular weight complexes in tumor cells. Interacts with SDCBP2. As to expression, highly expressed in skin and lung. Moderately expressed in lymph nodes and kidneys. Also present in thymic stroma and fibroblasts.

The protein resides in the membrane. The protein is Transmembrane 4 L6 family member 1 (Tm4sf1) of Mus musculus (Mouse).